The following is a 540-amino-acid chain: Medium/long-chain-fatty-acid--[acyl-carrier-protein] ligase FadD10 (540 aa).

Thr177 is a binding site for Mg(2+). The ATP site is built by Ile226, Val316, and Ser320. Residue Glu321 coordinates Mg(2+). Asp408 lines the ATP pocket.

This sequence belongs to the ATP-dependent AMP-binding enzyme family. As to quaternary structure, homodimer. Mg(2+) serves as cofactor.

It localises to the cytoplasm. The enzyme catalyses a medium-chain fatty acid + holo-[ACP] + ATP = a medium-chain fatty acyl-[ACP] + AMP + diphosphate. The catalysed reaction is a medium-chain fatty acid + ATP + H(+) = a medium-chain fatty acyl-AMP + diphosphate. It catalyses the reaction a medium-chain fatty acyl-AMP + holo-[ACP] = a medium-chain fatty acyl-[ACP] + AMP + H(+). It carries out the reaction a long-chain fatty acid + holo-[ACP] + ATP = a long-chain fatty acyl-[ACP] + AMP + diphosphate. The enzyme catalyses a long-chain fatty acid + ATP + H(+) = a long-chain fatty acyl-AMP + diphosphate. The catalysed reaction is a long-chain fatty acyl-AMP + holo-[ACP] = a long-chain fatty acyl-[ACP] + AMP + H(+). It catalyses the reaction a (2E)-enoyl fatty acid + holo-[ACP] + ATP = a (2E)-enoyl-[ACP] + AMP + diphosphate. It carries out the reaction a (2E)-enoyl fatty acid + ATP + H(+) = a (2E)-2-fatty-enoyl-AMP + diphosphate. The enzyme catalyses a (2E)-2-fatty-enoyl-AMP + holo-[ACP] = a (2E)-enoyl-[ACP] + AMP + H(+). The catalysed reaction is a (3R)-3-isocyanyl-fatty acid + holo-[ACP] + ATP = a (3R)-3-isocyanyl-fatty acyl-[ACP] + AMP + diphosphate. It catalyses the reaction a (3R)-3-isocyanyl-fatty acid + ATP + H(+) = a (3R)-3-isocyanyl-fatty acyl-AMP + diphosphate. It carries out the reaction a (3R)-3-isocyanyl-fatty acyl-AMP + holo-[ACP] = a (3R)-3-isocyanyl-fatty acyl-[ACP] + AMP + H(+). The protein operates within lipid metabolism; fatty acid metabolism. In terms of biological role, acyl:acyl-carrier protein ligase involved in the biosynthesis of a unique class of isonitrile lipopeptides (INLPs) that seem to function as virulence factors in M.tuberculosis and to play a role in metal acquisition. Catalyzes the activation of medium/long-chain fatty acids as acyl-adenylates (acyl-AMP), which are then transferred to the phosphopantetheine arm of the acyl-carrier protein (ACP) MT0109. Acts twice during the INLP pathway, catalyzing the activation of a (2E)-enoyl fatty acid as well as the corresponding (3R)-3-isocyanyl-fatty acid as acyl-adenylates (acyl-AMP), and then the acyl transfer to the dedicated acyl-carrier protein MT0109. This Mycobacterium tuberculosis (strain CDC 1551 / Oshkosh) protein is Medium/long-chain-fatty-acid--[acyl-carrier-protein] ligase FadD10 (fadD10).